The chain runs to 444 residues: Platelet-activating factor acetylhydrolase (444 aa).

Residues 1–21 form the signal peptide; that stretch reads MLPSKLHALFCLCTCLALVYP. N-linked (GlcNAc...) asparagine glycosylation is found at asparagine 60 and asparagine 200. The Nucleophile role is filled by serine 274. Catalysis depends on charge relay system residues aspartate 297 and histidine 352. Asparagine 424 and asparagine 434 each carry an N-linked (GlcNAc...) asparagine glycan.

Belongs to the AB hydrolase superfamily. Lipase family. Post-translationally, N-glycosylated. Plasma.

It localises to the secreted. The protein localises to the extracellular space. It carries out the reaction a 1-O-alkyl-2-acetyl-sn-glycero-3-phosphocholine + H2O = a 1-O-alkyl-sn-glycero-3-phosphocholine + acetate + H(+). It catalyses the reaction 1-O-decyl-2-acetyl-sn-glycero-3-phosphocholine + H2O = 1-O-decyl-sn-glycero-3-phosphocholine + acetate + H(+). The catalysed reaction is 1-O-dodecyl-2-acetyl-sn-glycero-3-phosphocholine + H2O = 1-O-dodecyl-sn-glycero-3-phosphocholine + acetate + H(+). The enzyme catalyses 1-O-tetradecyl-2-acetyl-sn-glycero-3-phosphocholine + H2O = 1-O-tetradecyl-sn-glycero-3-phosphocholine + acetate + H(+). It carries out the reaction 1-O-hexadecyl-2-acetyl-sn-glycero-3-phosphocholine + H2O = 1-O-hexadecyl-sn-glycero-3-phosphocholine + acetate + H(+). It catalyses the reaction 1-O-octadecyl-2-acetyl-sn-glycero-3-phosphocholine + H2O = 1-O-octadecyl-sn-glycero-3-phosphocholine + acetate + H(+). The catalysed reaction is 1-hexadecanoyl-2-acetyl-sn-glycero-3-phosphocholine + H2O = 1-hexadecanoyl-sn-glycero-3-phosphocholine + acetate + H(+). The enzyme catalyses 1-hexadecanoyl-2-propionyl-sn-glycero-3-phosphocholine + H2O = propanoate + 1-hexadecanoyl-sn-glycero-3-phosphocholine + H(+). It carries out the reaction 1-hexadecanoyl-2-butanoyl-sn-glycero-3-phosphocholine + H2O = butanoate + 1-hexadecanoyl-sn-glycero-3-phosphocholine + H(+). It catalyses the reaction 1-hexadecanoyl-2-pentanoyl-sn-glycero-3-phosphocholine + H2O = pentanoate + 1-hexadecanoyl-sn-glycero-3-phosphocholine + H(+). The catalysed reaction is 1-hexadecanoyl-2-glutaroyl-sn-glycero-3-phosphocholine + H2O = glutarate + 1-hexadecanoyl-sn-glycero-3-phosphocholine + H(+). The enzyme catalyses 1-hexadecanoyl-2-(5-oxopentanoyl)-sn-glycero-3-phosphocholine + H2O = 5-oxopentanoate + 1-hexadecanoyl-sn-glycero-3-phosphocholine + H(+). It carries out the reaction 1-hexadecanoyl-2-(9-oxononanoyl)-sn-glycero-3-phosphocholine + H2O = 9-oxononanoate + 1-hexadecanoyl-sn-glycero-3-phosphocholine + H(+). It catalyses the reaction 1-hexadecanoyl-2-[9-hydroperoxy-(10E-octadecenoyl)]-sn-glycero-3-phosphocholine + H2O = 9-hydroperoxy-10E-octadecenoate + 1-hexadecanoyl-sn-glycero-3-phosphocholine + H(+). The catalysed reaction is 1-hexadecanoyl-2-(10-hydroperoxy-8E-octadecenoyl)-sn-glycero-3-phosphocholine + H2O = 10-hydroperoxy-(8E)-octadecenoate + 1-hexadecanoyl-sn-glycero-3-phosphocholine + H(+). Its function is as follows. Lipoprotein-associated calcium-independent phospholipase A2 involved in phospholipid catabolism during inflammatory and oxidative stress response. At the lipid-aqueous interface, hydrolyzes the ester bond of fatty acyl group attached at sn-2 position of phospholipids (phospholipase A2 activity). Specifically targets phospholipids with a short-chain fatty acyl group at sn-2 position. Can hydrolyze phospholipids with long fatty acyl chains, only if they carry oxidized functional groups. Hydrolyzes and inactivates platelet-activating factor (PAF, 1-O-alkyl-2-acetyl-sn-glycero-3-phosphocholine), a potent pro-inflammatory signaling lipid that acts through PTAFR on various innate immune cells. Hydrolyzes oxidatively truncated phospholipids carrying an aldehyde group at omega position, preventing their accumulation in low-density lipoprotein (LDL) particles and uncontrolled pro-inflammatory effects. As part of high-density lipoprotein (HDL) particles, can hydrolyze phospholipids having long-chain fatty acyl hydroperoxides at sn-2 position and protect against potential accumulation of these oxylipins in the vascular wall. Catalyzes the release from membrane phospholipids of F2-isoprostanes, lipid biomarkers of cellular oxidative damage. In Bos taurus (Bovine), this protein is Platelet-activating factor acetylhydrolase (PLA2G7).